The primary structure comprises 406 residues: Cysteine desulfurase (406 aa).

K226 bears the N6-(pyridoxal phosphate)lysine mark. C364 serves as the catalytic Cysteine persulfide intermediate.

The protein belongs to the class-V pyridoxal-phosphate-dependent aminotransferase family. Csd subfamily. Homodimer. Interacts with SufE and the SufBCD complex composed of SufB, SufC and SufD. The interaction with SufE is required to mediate the direct transfer of the sulfur atom from the S-sulfanylcysteine. Pyridoxal 5'-phosphate serves as cofactor.

It localises to the cytoplasm. It catalyses the reaction (sulfur carrier)-H + L-cysteine = (sulfur carrier)-SH + L-alanine. The enzyme catalyses L-selenocysteine + AH2 = hydrogenselenide + L-alanine + A + H(+). Its pathway is cofactor biosynthesis; iron-sulfur cluster biosynthesis. In terms of biological role, cysteine desulfurases mobilize the sulfur from L-cysteine to yield L-alanine, an essential step in sulfur metabolism for biosynthesis of a variety of sulfur-containing biomolecules. Component of the suf operon, which is activated and required under specific conditions such as oxidative stress and iron limitation. Acts as a potent selenocysteine lyase in vitro, that mobilizes selenium from L-selenocysteine. Selenocysteine lyase activity is however unsure in vivo. The sequence is that of Cysteine desulfurase from Escherichia coli O9:H4 (strain HS).